A 433-amino-acid polypeptide reads, in one-letter code: 3-phosphoshikimate 1-carboxyvinyltransferase (433 aa).

3-phosphoshikimate-binding residues include lysine 22, serine 23, and arginine 27. Lysine 22 is a binding site for phosphoenolpyruvate. Residues glycine 96 and arginine 130 each coordinate phosphoenolpyruvate. Positions 176, 177, 178, 204, 319, 342, and 346 each coordinate 3-phosphoshikimate. Glutamine 178 is a phosphoenolpyruvate binding site. Aspartate 319 functions as the Proton acceptor in the catalytic mechanism. Residues arginine 350, arginine 394, and lysine 419 each contribute to the phosphoenolpyruvate site.

It belongs to the EPSP synthase family. Monomer.

The protein localises to the cytoplasm. The catalysed reaction is 3-phosphoshikimate + phosphoenolpyruvate = 5-O-(1-carboxyvinyl)-3-phosphoshikimate + phosphate. The protein operates within metabolic intermediate biosynthesis; chorismate biosynthesis; chorismate from D-erythrose 4-phosphate and phosphoenolpyruvate: step 6/7. Its function is as follows. Catalyzes the transfer of the enolpyruvyl moiety of phosphoenolpyruvate (PEP) to the 5-hydroxyl of shikimate-3-phosphate (S3P) to produce enolpyruvyl shikimate-3-phosphate and inorganic phosphate. This Actinobacillus succinogenes (strain ATCC 55618 / DSM 22257 / CCUG 43843 / 130Z) protein is 3-phosphoshikimate 1-carboxyvinyltransferase.